A 142-amino-acid chain; its full sequence is Small ribosomal subunit protein bS16 (142 aa).

The interval 88–142 is disordered; the sequence is GAEGTLRQPEGKTPFVAPDNGSVIIPEAITPKAEKAEEAPAEDAAPAEDDAEKAE. The segment covering 126–142 has biased composition (acidic residues); the sequence is APAEDAAPAEDDAEKAE.

The protein belongs to the bacterial ribosomal protein bS16 family.

The chain is Small ribosomal subunit protein bS16 from Kocuria rhizophila (strain ATCC 9341 / DSM 348 / NBRC 103217 / DC2201).